The chain runs to 901 residues: Protein translocase subunit SecA (901 aa).

ATP is bound by residues Gln-87, Gly-105 to Thr-109, and Asp-512. Zn(2+)-binding residues include Cys-885, Cys-887, Cys-896, and His-897.

Belongs to the SecA family. Monomer and homodimer. Part of the essential Sec protein translocation apparatus which comprises SecA, SecYEG and auxiliary proteins SecDF-YajC and YidC. Requires Zn(2+) as cofactor.

It is found in the cell inner membrane. Its subcellular location is the cytoplasm. It carries out the reaction ATP + H2O + cellular proteinSide 1 = ADP + phosphate + cellular proteinSide 2.. In terms of biological role, part of the Sec protein translocase complex. Interacts with the SecYEG preprotein conducting channel. Has a central role in coupling the hydrolysis of ATP to the transfer of proteins into and across the cell membrane, serving both as a receptor for the preprotein-SecB complex and as an ATP-driven molecular motor driving the stepwise translocation of polypeptide chains across the membrane. This Salmonella enteritidis PT4 (strain P125109) protein is Protein translocase subunit SecA.